Consider the following 147-residue polypeptide: MNIGQASKVVSGVSSKMIRYYEQIGLIRPALRTASSYRVYGDNDIHTLQFVRRARDLGFSVEQIKDLLALWRDRSRNSANVKAVALEHIAELERKIAAIEEMTTTLKHLASHCHGDDRPECPIIEEIANAADGKKPRANARFGLSAL.

The 70-residue stretch at 1-70 (MNIGQASKVV…VEQIKDLLAL (70 aa)) folds into the HTH merR-type domain. The H-T-H motif DNA-binding region spans 3-22 (IGQASKVVSGVSSKMIRYYE).

It is found in the cytoplasm. Functionally, transcriptional regulator involved in acid tolerance. Binds copper. The protein is Heavy metal-dependent transcription regulator 1 (hmrR1) of Rhizobium meliloti (strain 1021) (Ensifer meliloti).